The following is a 339-amino-acid chain: Isopentenyl-diphosphate delta-isomerase (339 aa).

7 to 8 (RK) provides a ligand contact to substrate. Residues serine 65, 66-68 (SMT), serine 96, and asparagine 125 contribute to the FMN site. 96 to 98 (SQR) is a binding site for substrate. Position 160 (glutamine 160) interacts with substrate. Residue glutamate 161 coordinates Mg(2+). FMN contacts are provided by residues lysine 192, threonine 222, and 293–294 (AG).

The protein belongs to the IPP isomerase type 2 family. In terms of assembly, homooctamer. Dimer of tetramers. FMN is required as a cofactor. The cofactor is NADPH. Requires Mg(2+) as cofactor.

It is found in the cytoplasm. The catalysed reaction is isopentenyl diphosphate = dimethylallyl diphosphate. Its function is as follows. Involved in the biosynthesis of isoprenoids. Catalyzes the 1,3-allylic rearrangement of the homoallylic substrate isopentenyl (IPP) to its allylic isomer, dimethylallyl diphosphate (DMAPP). This chain is Isopentenyl-diphosphate delta-isomerase, found in Vibrio campbellii (strain ATCC BAA-1116).